A 473-amino-acid polypeptide reads, in one-letter code: Adenosylhomocysteinase (473 aa).

T64, D139, and E199 together coordinate substrate. 200 to 202 is a binding site for NAD(+); the sequence is TTT. Residues K229 and D233 each coordinate substrate. Residues N234, 263 to 268, E286, N321, 342 to 344, and N387 contribute to the NAD(+) site; these read GYGDVG and IGH.

The protein belongs to the adenosylhomocysteinase family. Requires NAD(+) as cofactor.

Its subcellular location is the cytoplasm. The catalysed reaction is S-adenosyl-L-homocysteine + H2O = L-homocysteine + adenosine. It functions in the pathway amino-acid biosynthesis; L-homocysteine biosynthesis; L-homocysteine from S-adenosyl-L-homocysteine: step 1/1. In terms of biological role, may play a key role in the regulation of the intracellular concentration of adenosylhomocysteine. The polypeptide is Adenosylhomocysteinase (Burkholderia thailandensis (strain ATCC 700388 / DSM 13276 / CCUG 48851 / CIP 106301 / E264)).